Here is a 203-residue protein sequence, read N- to C-terminus: Small ribosomal subunit protein uS4 (203 aa).

Residues 93–156 (RRLDNVVYRL…AKVPAILEAV (64 aa)) enclose the S4 RNA-binding domain.

Belongs to the universal ribosomal protein uS4 family. As to quaternary structure, part of the 30S ribosomal subunit. Contacts protein S5. The interaction surface between S4 and S5 is involved in control of translational fidelity.

In terms of biological role, one of the primary rRNA binding proteins, it binds directly to 16S rRNA where it nucleates assembly of the body of the 30S subunit. Functionally, with S5 and S12 plays an important role in translational accuracy. In Streptococcus mutans serotype c (strain ATCC 700610 / UA159), this protein is Small ribosomal subunit protein uS4.